The sequence spans 1255 residues: RNA-directed RNA polymerase (1255 aa).

A RdRp catalytic domain is found at 548 to 756 (LIPLGLSPYA…QQRVSCGTFV (209 aa)).

It is found in the virion. It catalyses the reaction RNA(n) + a ribonucleoside 5'-triphosphate = RNA(n+1) + diphosphate. In terms of biological role, RNA-directed RNA polymerase that is involved in transcription and genome replication. Following infection, it catalyzes the synthesis of fully conservative plus strands. After core assembly, which consists in recruitment of one capped plus-strand for each genomic segments and polymerase complexes, the polymerase switches mode and catalyzes the synthesis of complementary minus-strands. The sequence is that of RNA-directed RNA polymerase from Oryza latifolia (Indian wild rice).